A 514-amino-acid polypeptide reads, in one-letter code: RNA-splicing ligase RtcB homolog (514 aa).

The Mn(2+) site is built by D128, C131, H236, H268, and H362. 235 to 239 (NHYAE) contacts GMP. GMP is bound by residues 362–363 (HN), 411–414 (GGTM), S418, 437–440 (HGAG), and K513. The active-site GMP-histidine intermediate is the H437.

The protein belongs to the RtcB family. Catalytic component of the tRNA-splicing ligase complex. The cofactor is Mn(2+).

It carries out the reaction a 3'-end 3'-phospho-ribonucleotide-RNA + a 5'-end dephospho-ribonucleoside-RNA + GTP = a ribonucleotidyl-ribonucleotide-RNA + GMP + diphosphate. The enzyme catalyses a 3'-end 2',3'-cyclophospho-ribonucleotide-RNA + a 5'-end dephospho-ribonucleoside-RNA + GTP + H2O = a ribonucleotidyl-ribonucleotide-RNA + GMP + diphosphate + H(+). Its function is as follows. Catalytic subunit of the tRNA-splicing ligase complex that acts by directly joining spliced tRNA halves to mature-sized tRNAs by incorporating the precursor-derived splice junction phosphate into the mature tRNA as a canonical 3',5'-phosphodiester. May act as an RNA ligase with broad substrate specificity, and may function toward other RNAs. The sequence is that of RNA-splicing ligase RtcB homolog from Ostreococcus lucimarinus (strain CCE9901).